The following is a 202-amino-acid chain: Superoxide dismutase [Fe] (202 aa).

Fe cation-binding residues include H30, H78, D164, and H168.

Belongs to the iron/manganese superoxide dismutase family. Homotetramer. Fe cation serves as cofactor.

The catalysed reaction is 2 superoxide + 2 H(+) = H2O2 + O2. Destroys superoxide anion radicals which are normally produced within the cells and which are toxic to biological systems. This is Superoxide dismutase [Fe] (sod) from Methanothermobacter marburgensis (strain ATCC BAA-927 / DSM 2133 / JCM 14651 / NBRC 100331 / OCM 82 / Marburg) (Methanobacterium thermoautotrophicum).